Here is a 317-residue protein sequence, read N- to C-terminus: Protoheme IX farnesyltransferase (317 aa).

A run of 9 helical transmembrane segments spans residues Val-36–Asn-56, Pro-57–Leu-77, Leu-108–Trp-128, Leu-129–Leu-149, Ile-157–Gly-177, Leu-184–Val-204, Ile-230–Leu-247, Gly-251–Tyr-273, and Ala-284–Leu-304.

The protein belongs to the UbiA prenyltransferase family. Protoheme IX farnesyltransferase subfamily.

It localises to the cell inner membrane. The enzyme catalyses heme b + (2E,6E)-farnesyl diphosphate + H2O = Fe(II)-heme o + diphosphate. It functions in the pathway porphyrin-containing compound metabolism; heme O biosynthesis; heme O from protoheme: step 1/1. In terms of biological role, converts heme B (protoheme IX) to heme O by substitution of the vinyl group on carbon 2 of heme B porphyrin ring with a hydroxyethyl farnesyl side group. This chain is Protoheme IX farnesyltransferase, found in Methylorubrum extorquens (strain CM4 / NCIMB 13688) (Methylobacterium extorquens).